Reading from the N-terminus, the 314-residue chain is Olfactory receptor 5I1 (314 aa).

Residues 1-27 are Extracellular-facing; the sequence is MEFTDRNYTLVTEFILLGFPTRPELQI. Asn7 carries N-linked (GlcNAc...) asparagine glycosylation. Residues 28 to 48 traverse the membrane as a helical segment; the sequence is VLFLMFLTLYAIILIGNIGLM. The Cytoplasmic segment spans residues 49–56; that stretch reads LLIRIDPH. Residues 57 to 77 traverse the membrane as a helical segment; that stretch reads LQTPMYFFLSNLSFVDLCYFS. At 78–101 the chain is on the extracellular side; sequence DIVPKMLVNFLSENKSISYYGCAL. A disulfide bond links Cys99 and Cys191. Residues 102 to 122 traverse the membrane as a helical segment; it reads QFYFFCTFADTESFILAAMAY. Over 123–141 the chain is Cytoplasmic; that stretch reads DRYVAICNPLLYTVVMSRG. The chain crosses the membrane as a helical span at residues 142-162; sequence ICMRLIVLSYLGGNMSSLVHT. Residues 163–198 are Extracellular-facing; the sequence is SFAFILKYCDKNVINHFFCDLPPLLKLSCTDTTINE. The helical transmembrane segment at 199 to 219 threads the bilayer; it reads WLLSTYGSSVEIICFIIIIIS. Residues 220–239 lie on the Cytoplasmic side of the membrane; it reads YFFILLSVLKIRSFSGRKKT. A helical membrane pass occupies residues 240 to 260; sequence FSTCASHLTSVTIYQGTLLFI. The Extracellular portion of the chain corresponds to 261-273; the sequence is YSRPSYLYSPNTD. The chain crosses the membrane as a helical span at residues 274–294; it reads KIISVFYTIFIPVLNPLIYSL. Residues 295-314 lie on the Cytoplasmic side of the membrane; the sequence is RNKDVKDAAEKVLRSKVDSS.

Belongs to the G-protein coupled receptor 1 family.

Its subcellular location is the cell membrane. Odorant receptor. This Homo sapiens (Human) protein is Olfactory receptor 5I1 (OR5I1).